The sequence spans 119 residues: Large ribosomal subunit protein bL17 (119 aa).

It belongs to the bacterial ribosomal protein bL17 family. As to quaternary structure, part of the 50S ribosomal subunit. Contacts protein L32.

The protein is Large ribosomal subunit protein bL17 of Psychrobacter arcticus (strain DSM 17307 / VKM B-2377 / 273-4).